Here is a 182-residue protein sequence, read N- to C-terminus: Large ribosomal subunit protein uL10 (182 aa).

Belongs to the universal ribosomal protein uL10 family. As to quaternary structure, part of the ribosomal stalk of the 50S ribosomal subunit. The N-terminus interacts with L11 and the large rRNA to form the base of the stalk. The C-terminus forms an elongated spine to which L12 dimers bind in a sequential fashion forming a multimeric L10(L12)X complex.

Forms part of the ribosomal stalk, playing a central role in the interaction of the ribosome with GTP-bound translation factors. This chain is Large ribosomal subunit protein uL10, found in Herminiimonas arsenicoxydans.